Consider the following 238-residue polypeptide: Probable transcriptional regulatory protein YcdB (238 aa).

The protein belongs to the TACO1 family. YeeN subfamily.

The protein resides in the cytoplasm. In Lactococcus lactis subsp. lactis (strain IL1403) (Streptococcus lactis), this protein is Probable transcriptional regulatory protein YcdB (ycdB).